We begin with the raw amino-acid sequence, 439 residues long: Ribosomal protein uS12 methylthiotransferase RimO (439 aa).

One can recognise an MTTase N-terminal domain in the interval 7-119; it reads KQLCLISLGC…IDILIAKKQN (113 aa). Residues Cys16, Cys50, Cys82, Cys151, Cys155, and Cys158 each contribute to the [4Fe-4S] cluster site. Positions 137-368 constitute a Radical SAM core domain; sequence TGSSVHAYVK…ALKHQNHSFK (232 aa).

Belongs to the methylthiotransferase family. RimO subfamily. Requires [4Fe-4S] cluster as cofactor.

Its subcellular location is the cytoplasm. It carries out the reaction L-aspartate(89)-[ribosomal protein uS12]-hydrogen + (sulfur carrier)-SH + AH2 + 2 S-adenosyl-L-methionine = 3-methylsulfanyl-L-aspartate(89)-[ribosomal protein uS12]-hydrogen + (sulfur carrier)-H + 5'-deoxyadenosine + L-methionine + A + S-adenosyl-L-homocysteine + 2 H(+). In terms of biological role, catalyzes the methylthiolation of an aspartic acid residue of ribosomal protein uS12. This is Ribosomal protein uS12 methylthiotransferase RimO from Helicobacter pylori (strain HPAG1).